Here is a 529-residue protein sequence, read N- to C-terminus: Peptide chain release factor 3 (529 aa).

The 270-residue stretch at 11–280 folds into the tr-type G domain; the sequence is SKRRTFAIIS…GLTEWAPAPK (270 aa). Residues 20–27, 88–92, and 142–145 contribute to the GTP site; these read SHPDAGKT, DTPGH, and NKLD.

It belongs to the TRAFAC class translation factor GTPase superfamily. Classic translation factor GTPase family. PrfC subfamily.

The protein localises to the cytoplasm. Increases the formation of ribosomal termination complexes and stimulates activities of RF-1 and RF-2. It binds guanine nucleotides and has strong preference for UGA stop codons. It may interact directly with the ribosome. The stimulation of RF-1 and RF-2 is significantly reduced by GTP and GDP, but not by GMP. This is Peptide chain release factor 3 from Vibrio campbellii (strain ATCC BAA-1116).